Reading from the N-terminus, the 101-residue chain is Movement protein (101 aa).

Residues 30–50 traverse the membrane as a helical segment; that stretch reads EVAVLSFVALICIYLLYLWVL. A disordered region spans residues 78–101; the sequence is RSPIPNTLEPTAPVHPGPFVPGSG. Over residues 90–101 the composition is skewed to pro residues; it reads PVHPGPFVPGSG.

The protein belongs to the mastrevirus movement protein family. In terms of assembly, interacts with the capsid protein (CP). Part of a MP-CP-viral DNA complex.

The protein resides in the host membrane. Involved in the viral transport within, and between cells. The protein is Movement protein of Maize streak virus genotype E (isolate Pat) (MSV).